We begin with the raw amino-acid sequence, 610 residues long: 1,8-cineol synthase, chloroplastic (610 aa).

The transit peptide at 1 to 51 (MNHHLIITPIFHLQIMLPVATLKRPPPPAATCSIYSFSRGTPSLVSKARLS) directs the protein to the chloroplast. (2E)-geranyl diphosphate is bound by residues arginine 322, aspartate 359, aspartate 363, arginine 500, and asparagine 503. 2 residues coordinate Mg(2+): aspartate 359 and aspartate 363. Residues 359 to 363 (DDVYD) carry the DDXXD motif motif. The Mg(2+) site is built by asparagine 503, threonine 507, and glutamate 511.

Belongs to the terpene synthase family. Tpsb subfamily. As to quaternary structure, monomer. Mg(2+) serves as cofactor. Mn(2+) is required as a cofactor. In terms of tissue distribution, confined to buds and flowers.

The protein resides in the plastid. Its subcellular location is the chloroplast. It carries out the reaction (2E)-geranyl diphosphate + H2O = 1,8-cineole + diphosphate. It catalyses the reaction (2E)-geranyl diphosphate = limonene + diphosphate. The enzyme catalyses (2E)-geranyl diphosphate = sabinene + diphosphate. The catalysed reaction is (2E)-geranyl diphosphate = (E)-beta-ocimene + diphosphate. It carries out the reaction (2E)-geranyl diphosphate = beta-myrcene + diphosphate. It catalyses the reaction (2E)-geranyl diphosphate = alpha-pinene + diphosphate. The enzyme catalyses (2E)-geranyl diphosphate + H2O = (S)-alpha-terpineol + diphosphate. Its pathway is secondary metabolite biosynthesis; terpenoid biosynthesis. Monoterpene synthase involved in the biosynthesis of monoterpene natural products of the 'cineole cassette', volatile compounds present in floral scent. Catalyzes the conversion of (2E)-geranyl diphosphate (GPP) into 1,8-cineole and, as minor products, limonene, sabinene, (E)-beta-ocimene, beta-myrcene, alpha-pinene and alpha-terpineol. The sequence is that of 1,8-cineol synthase, chloroplastic from Nicotiana suaveolens (Australian tobacco).